We begin with the raw amino-acid sequence, 45 residues long: Defensin Tk-AMP-D3 (45 aa).

Cystine bridges form between Cys-3/Cys-45, Cys-14/Cys-34, Cys-20/Cys-39, and Cys-24/Cys-41.

Plant defense peptide. The polypeptide is Defensin Tk-AMP-D3 (Triticum kiharae (Wheat)).